A 339-amino-acid polypeptide reads, in one-letter code: D-erythrose-4-phosphate dehydrogenase (339 aa).

11-12 (RI) provides a ligand contact to NAD(+). Residues 153-155 (SCT), R199, 212-213 (TK), and R235 contribute to the substrate site. C154 serves as the catalytic Nucleophile. N317 lines the NAD(+) pocket.

Belongs to the glyceraldehyde-3-phosphate dehydrogenase family. Epd subfamily. In terms of assembly, homotetramer.

Its subcellular location is the cytoplasm. The enzyme catalyses D-erythrose 4-phosphate + NAD(+) + H2O = 4-phospho-D-erythronate + NADH + 2 H(+). Its pathway is cofactor biosynthesis; pyridoxine 5'-phosphate biosynthesis; pyridoxine 5'-phosphate from D-erythrose 4-phosphate: step 1/5. Functionally, catalyzes the NAD-dependent conversion of D-erythrose 4-phosphate to 4-phosphoerythronate. This chain is D-erythrose-4-phosphate dehydrogenase, found in Shewanella frigidimarina (strain NCIMB 400).